The sequence spans 435 residues: Ornithine decarboxylase (435 aa).

Lysine 76 carries the post-translational modification N6-(pyridoxal phosphate)lysine. Pyridoxal 5'-phosphate-binding positions include serine 207, glycine 244, and glutamate 283 to arginine 286. Phenylalanine 339 to aspartate 340 contributes to the substrate binding site. The active-site Proton donor; shared with dimeric partner is the cysteine 368. Aspartate 369 contacts substrate. A pyridoxal 5'-phosphate-binding site is contributed by tyrosine 397.

The protein belongs to the Orn/Lys/Arg decarboxylase class-II family. Homodimer. Only the dimer is catalytically active, as the active sites are constructed of residues from both monomers. Requires pyridoxal 5'-phosphate as cofactor.

The catalysed reaction is L-ornithine + H(+) = putrescine + CO2. It functions in the pathway amine and polyamine biosynthesis; putrescine biosynthesis via L-ornithine pathway; putrescine from L-ornithine: step 1/1. Inhibited by antizyme (AZ) in response to polyamine levels. AZ inhibits the assembly of the functional homodimer by binding to ODC monomers and targeting them for ubiquitin-independent proteolytic destruction by the 26S proteasome. In terms of biological role, catalyzes the first and rate-limiting step of polyamine biosynthesis that converts ornithine into putrescine, which is the precursor for the polyamines, spermidine and spermine. Polyamines are essential for cell proliferation and are implicated in cellular processes, ranging from DNA replication to apoptosis. The sequence is that of Ornithine decarboxylase (ODC) from Panagrellus redivivus (Microworm).